We begin with the raw amino-acid sequence, 641 residues long: SUMO-activating enzyme subunit 2-B (641 aa).

ATP contacts are provided by residues 24–29 (GAGGIG), D48, 56–59 (NLNR), K72, 95–96 (SI), and 117–122 (DNNAAR). Residues C158 and C161 each contribute to the Zn(2+) site. The active-site Glycyl thioester intermediate is the C173. Zn(2+) contacts are provided by C439 and C442. The disordered stretch occupies residues 546-641 (GDVPEKGPQK…EEDDDIIALD (96 aa)). The segment covering 548-561 (VPEKGPQKPPEESV) has biased composition (basic and acidic residues). The span at 562 to 579 (KNITNGSDDGAQPSTSKA) shows a compositional bias: polar residues. Acidic residues-rich tracts occupy residues 582–594 (QDDV…DEES) and 630–641 (PVEEDDDIIALD).

Belongs to the ubiquitin-activating E1 family. In terms of assembly, heterodimer of sae1 and uba2/sae2. The heterodimer corresponds to the two domains that are encoded on a single polypeptide chain in ubiquitin-activating enzyme E1. Interacts with ube2i.

It is found in the nucleus. The protein operates within protein modification; protein sumoylation. Functionally, the heterodimer acts as an E1 ligase for sumo1, sumo2, and sumo3. It mediates ATP-dependent activation of sumo proteins followed by formation of a thioester bond between a sumo protein and a conserved active site cysteine residue on uba2/sae2. This chain is SUMO-activating enzyme subunit 2-B (uba2-b), found in Xenopus laevis (African clawed frog).